Reading from the N-terminus, the 306-residue chain is MNWITNYVRPKINSILGRREIPENLWIKDPTSGEMIFHKDLEANQFVAPNSGYHMRISAKNRLVHFFDDGVYTALENPKVVTDPLKFRDEKRYIDRLKDYRSKLGVDDNILSARGTIEGLPIIATVQDFAFMGGSLGMASGEAIVKAFDTAIAEKCPLVLFAASGGARMQEGTLSLMQMPRTTVAIEMLKEAKLPYIVVLTNPTTGGVTASYAMLGDIHIAEPGAMIGFAGPRVIQQTIRETLPEGFQSSEYLLEHGMIDMVVSRLEMKTTIARLLRLMMKRPAVVTPSPPSPTDSQTSLSKTKAA.

In terms of domain architecture, CoA carboxyltransferase N-terminal spans 25-294 (LWIKDPTSGE…VVTPSPPSPT (270 aa)). Residues 284–306 (AVVTPSPPSPTDSQTSLSKTKAA) are disordered.

This sequence belongs to the AccD/PCCB family. As to quaternary structure, acetyl-CoA carboxylase is a heterohexamer composed of biotin carboxyl carrier protein (AccB), biotin carboxylase (AccC) and two subunits each of ACCase subunit alpha (AccA) and ACCase subunit beta (AccD).

It is found in the cytoplasm. It carries out the reaction N(6)-carboxybiotinyl-L-lysyl-[protein] + acetyl-CoA = N(6)-biotinyl-L-lysyl-[protein] + malonyl-CoA. It functions in the pathway lipid metabolism; malonyl-CoA biosynthesis; malonyl-CoA from acetyl-CoA: step 1/1. Component of the acetyl coenzyme A carboxylase (ACC) complex. Biotin carboxylase (BC) catalyzes the carboxylation of biotin on its carrier protein (BCCP) and then the CO(2) group is transferred by the transcarboxylase to acetyl-CoA to form malonyl-CoA. This Bartonella tribocorum (strain CIP 105476 / IBS 506) protein is Acetyl-coenzyme A carboxylase carboxyl transferase subunit beta.